The following is a 490-amino-acid chain: Cardiolipin synthase A (490 aa).

2 consecutive transmembrane segments (helical) span residues 4–24 and 39–59; these read YLFTITTWLIIISYWFIIIIV and AAWLLVIYIIPFIGICTWFLL. 2 consecutive PLD phosphodiesterase domains span residues 220 to 247 and 403 to 430; these read MDLRQHRKFILIDNYITYIGSMNLVDPY and KKGLLHSKSVLVDKQLSLIGTVNLDMRS. Residues His-225, Lys-227, Asp-232, His-408, Lys-410, and Asp-415 contribute to the active site.

The protein belongs to the phospholipase D family. Cardiolipin synthase subfamily. ClsA sub-subfamily.

The protein resides in the cell membrane. The enzyme catalyses 2 a 1,2-diacyl-sn-glycero-3-phospho-(1'-sn-glycerol) = a cardiolipin + glycerol. Functionally, catalyzes the reversible phosphatidyl group transfer from one phosphatidylglycerol molecule to another to form cardiolipin (CL) (diphosphatidylglycerol) and glycerol. The chain is Cardiolipin synthase A from Buchnera aphidicola subsp. Baizongia pistaciae (strain Bp).